The chain runs to 715 residues: Interferon-induced GTP-binding protein Mx2 (715 aa).

The region spanning 115–387 is the Dynamin-type G domain; sequence DLALPAIAVI…LIMHIQKSLP (273 aa). The segment at 125-132 is G1 motif; it reads GDQSSGKS. Residue 125–132 coordinates GTP; it reads GDQSSGKS. Residues 150 to 152 are G2 motif; the sequence is VTR. Positions 225 to 228 are G3 motif; sequence DLPG. Residues 225–229 and 294–297 each bind GTP; these read DLPGI and TKPD. Residues 294 to 297 are G4 motif; sequence TKPD. Residues 326–329 are G5 motif; that stretch reads KCRG. Residues 623–714 form the GED domain; it reads FTEIGIHLNA…ALCQFSSKEI (92 aa).

Belongs to the TRAFAC class dynamin-like GTPase superfamily. Dynamin/Fzo/YdjA family.

The protein localises to the cytoplasm. It localises to the nucleus. Its subcellular location is the nuclear pore complex. Functionally, interferon-induced dynamin-like GTPase with potent antiviral activity against human immunodeficiency virus type 1 (HIV-1). Acts by targeting the viral capsid and affects the nuclear uptake and/or stability of the HIV-1 replication complex and the subsequent chromosomal integration of the proviral DNA. Exhibits antiviral activity also against simian immunodeficiency virus (SIV-mnd). May play a role in regulating nucleocytoplasmic transport and cell-cycle progression. In Homo sapiens (Human), this protein is Interferon-induced GTP-binding protein Mx2 (MX2).